The primary structure comprises 957 residues: Glycine dehydrogenase (decarboxylating) 2 (957 aa).

Lys-707 is subject to N6-(pyridoxal phosphate)lysine.

Belongs to the GcvP family. As to quaternary structure, the glycine cleavage system is composed of four proteins: P, T, L and H. Pyridoxal 5'-phosphate is required as a cofactor.

It carries out the reaction N(6)-[(R)-lipoyl]-L-lysyl-[glycine-cleavage complex H protein] + glycine + H(+) = N(6)-[(R)-S(8)-aminomethyldihydrolipoyl]-L-lysyl-[glycine-cleavage complex H protein] + CO2. Functionally, the glycine cleavage system catalyzes the degradation of glycine. The P protein binds the alpha-amino group of glycine through its pyridoxal phosphate cofactor; CO(2) is released and the remaining methylamine moiety is then transferred to the lipoamide cofactor of the H protein. The chain is Glycine dehydrogenase (decarboxylating) 2 from Pseudomonas fluorescens (strain ATCC BAA-477 / NRRL B-23932 / Pf-5).